Reading from the N-terminus, the 281-residue chain is Pantothenate synthetase (281 aa).

An ATP-binding site is contributed by 31–38; that stretch reads MGALHDGH. His38 acts as the Proton donor in catalysis. Gln62 provides a ligand contact to (R)-pantoate. A beta-alanine-binding site is contributed by Gln62. 148–151 contributes to the ATP binding site; it reads GQKD. Gln154 lines the (R)-pantoate pocket. ATP-binding positions include Val177 and 185-188; that span reads LSSR.

The protein belongs to the pantothenate synthetase family. Homodimer.

The protein resides in the cytoplasm. It carries out the reaction (R)-pantoate + beta-alanine + ATP = (R)-pantothenate + AMP + diphosphate + H(+). Its pathway is cofactor biosynthesis; (R)-pantothenate biosynthesis; (R)-pantothenate from (R)-pantoate and beta-alanine: step 1/1. Functionally, catalyzes the condensation of pantoate with beta-alanine in an ATP-dependent reaction via a pantoyl-adenylate intermediate. The protein is Pantothenate synthetase of Dinoroseobacter shibae (strain DSM 16493 / NCIMB 14021 / DFL 12).